Consider the following 109-residue polypeptide: Cell cycle protein GpsB (109 aa).

A coiled-coil region spans residues 36–63 (IKDYETYAALVKSLRQEIADLKEELTRK).

Belongs to the GpsB family. In terms of assembly, forms polymers through the coiled coil domains. Interacts with PBP1, MreC and EzrA.

Its subcellular location is the cytoplasm. Divisome component that associates with the complex late in its assembly, after the Z-ring is formed, and is dependent on DivIC and PBP2B for its recruitment to the divisome. Together with EzrA, is a key component of the system that regulates PBP1 localization during cell cycle progression. Its main role could be the removal of PBP1 from the cell pole after pole maturation is completed. Also contributes to the recruitment of PBP1 to the division complex. Not essential for septum formation. The protein is Cell cycle protein GpsB of Streptococcus pneumoniae serotype 4 (strain ATCC BAA-334 / TIGR4).